A 361-amino-acid polypeptide reads, in one-letter code: Holliday junction branch migration complex subunit RuvB (361 aa).

Composition is skewed to basic and acidic residues over residues 1–13 (MSDVERTEFKLPE) and 33–43 (QGEHDIERSLR). Residues 1–43 (MSDVERTEFKLPEGMDLSSPPQRNQDVDAAEQQGEHDIERSLR) form a disordered region. The tract at residues 2 to 203 (SDVERTEFKL…FGFTAQMEYY (202 aa)) is large ATPase domain (RuvB-L). Residues leucine 42, arginine 43, glycine 84, lysine 87, threonine 88, threonine 89, 150-152 (EDF), arginine 193, tyrosine 203, and arginine 240 contribute to the ATP site. Threonine 88 is a binding site for Mg(2+). The small ATPAse domain (RuvB-S) stretch occupies residues 204-274 (DTEDLTRVIS…AAQAALRVFD (71 aa)). The interval 277 to 361 (ERGLDRLDRA…PEGAIGGTLF (85 aa)) is head domain (RuvB-H). DNA is bound by residues arginine 332 and arginine 337.

The protein belongs to the RuvB family. As to quaternary structure, homohexamer. Forms an RuvA(8)-RuvB(12)-Holliday junction (HJ) complex. HJ DNA is sandwiched between 2 RuvA tetramers; dsDNA enters through RuvA and exits via RuvB. An RuvB hexamer assembles on each DNA strand where it exits the tetramer. Each RuvB hexamer is contacted by two RuvA subunits (via domain III) on 2 adjacent RuvB subunits; this complex drives branch migration. In the full resolvosome a probable DNA-RuvA(4)-RuvB(12)-RuvC(2) complex forms which resolves the HJ.

The protein localises to the cytoplasm. The enzyme catalyses ATP + H2O = ADP + phosphate + H(+). In terms of biological role, the RuvA-RuvB-RuvC complex processes Holliday junction (HJ) DNA during genetic recombination and DNA repair, while the RuvA-RuvB complex plays an important role in the rescue of blocked DNA replication forks via replication fork reversal (RFR). RuvA specifically binds to HJ cruciform DNA, conferring on it an open structure. The RuvB hexamer acts as an ATP-dependent pump, pulling dsDNA into and through the RuvAB complex. RuvB forms 2 homohexamers on either side of HJ DNA bound by 1 or 2 RuvA tetramers; 4 subunits per hexamer contact DNA at a time. Coordinated motions by a converter formed by DNA-disengaged RuvB subunits stimulates ATP hydrolysis and nucleotide exchange. Immobilization of the converter enables RuvB to convert the ATP-contained energy into a lever motion, pulling 2 nucleotides of DNA out of the RuvA tetramer per ATP hydrolyzed, thus driving DNA branch migration. The RuvB motors rotate together with the DNA substrate, which together with the progressing nucleotide cycle form the mechanistic basis for DNA recombination by continuous HJ branch migration. Branch migration allows RuvC to scan DNA until it finds its consensus sequence, where it cleaves and resolves cruciform DNA. The sequence is that of Holliday junction branch migration complex subunit RuvB from Corynebacterium aurimucosum (strain ATCC 700975 / DSM 44827 / CIP 107346 / CN-1) (Corynebacterium nigricans).